Consider the following 253-residue polypeptide: Imidazole glycerol phosphate synthase subunit HisF (253 aa).

Residues D11 and D130 contribute to the active site.

It belongs to the HisA/HisF family. As to quaternary structure, heterodimer of HisH and HisF.

It is found in the cytoplasm. It carries out the reaction 5-[(5-phospho-1-deoxy-D-ribulos-1-ylimino)methylamino]-1-(5-phospho-beta-D-ribosyl)imidazole-4-carboxamide + L-glutamine = D-erythro-1-(imidazol-4-yl)glycerol 3-phosphate + 5-amino-1-(5-phospho-beta-D-ribosyl)imidazole-4-carboxamide + L-glutamate + H(+). It functions in the pathway amino-acid biosynthesis; L-histidine biosynthesis; L-histidine from 5-phospho-alpha-D-ribose 1-diphosphate: step 5/9. In terms of biological role, IGPS catalyzes the conversion of PRFAR and glutamine to IGP, AICAR and glutamate. The HisF subunit catalyzes the cyclization activity that produces IGP and AICAR from PRFAR using the ammonia provided by the HisH subunit. The chain is Imidazole glycerol phosphate synthase subunit HisF from Dehalococcoides mccartyi (strain ATCC BAA-2100 / JCM 16839 / KCTC 5957 / BAV1).